Reading from the N-terminus, the 684-residue chain is Dipeptidyl-peptidase 5 (684 aa).

An N-terminal signal peptide occupies residues Met1–Gly24. WD repeat units follow at residues Asp87 to Arg127, Lys220 to Ile259, and Thr323 to Arg363. Catalysis depends on charge relay system residues Ser542, Asp627, and His659.

This sequence belongs to the peptidase S9C family. Homodimer.

The protein localises to the periplasm. Functionally, catalyzes the removal of dipeptides from the N-terminus of oligopeptides. Prefers Ala and hydrophobic residues except Pro at the P1 position, and has no preference for P2 residues. Shows high dipeptidyl peptidase activity toward the synthetic substrates Lys-Ala-, Gly-Phe-, Met-Leu-, and Ser-Tyr-methylcoumaryl-7-amide (MCA), and slowly hydrolyzes Val-Tyr-MCA. Is likely involved in amino acid metabolism and bacterial growth of asaccharolytic P.gingivalis, that utilizes amino acids from extracellular proteinaceous nutrients as energy and carbon sources. The polypeptide is Dipeptidyl-peptidase 5 (Porphyromonas gingivalis (strain ATCC 33277 / DSM 20709 / CIP 103683 / JCM 12257 / NCTC 11834 / 2561)).